We begin with the raw amino-acid sequence, 422 residues long: Metallocarboxypeptidase A (422 aa).

An N-terminal signal peptide occupies residues 1-17 (MRSVLSLALLAANVVTA). Residues 18–112 (AVVSPFDYSG…FEAYSAGYAP (95 aa)) constitute a propeptide, activation peptide. The Peptidase M14 domain occupies 119–419 (SYHSYQDHLS…AGTVAMLKAV (301 aa)). Zn(2+) contacts are provided by H179 and E182. Substrate-binding positions include 179-182 (HARE), R237, and 254-255 (NR). Residues C248 and C271 are joined by a disulfide bond. Position 309 (H309) interacts with Zn(2+). A substrate-binding site is contributed by 310–311 (SY). The active-site Proton donor/acceptor is the E385.

Belongs to the peptidase M14 family. Requires Zn(2+) as cofactor.

The protein localises to the secreted. Functionally, extracellular metalloprotease that contributes to pathogenicity. In Trichophyton rubrum (Athlete's foot fungus), this protein is Metallocarboxypeptidase A (MCPA).